Here is a 440-residue protein sequence, read N- to C-terminus: MKNVGIKKAALQMSRYVLASKQVQRALKLLGLPASRANEVSGIPKPADTSLSFPGYEAFALHGEAWQAAGEQKPIILMFGVHPWKRDVLARYFSDFRVAYVRTNTSWTKVQTSFCQFTPQAFVFWGMTEIRAAKNYAIKSSIPLWRVEDGFLRSVGLGAQHVLPLSLAVDTTGIYFDPSRPSTLETLISEIGVTENATLIERARRCMSMISAFGLSKYNVGQDVPLKRLPPSDRRRVLVVGQVEDDASIVMGCAARYTNNDIVRITQKENPEAEVIYRPHPDVLGGHRKEFSNPRDVANICTILSGDYDLGSLLDSVDHVYTITSLLGFEALIRRKKVTVFGAPFYSGWGLTDDRQPTPRRTRKPSLDELFAAAYILYPRYCVGSLGSSAEIEHAIMSLALEKNGVPRELAEGVSSALPAEAINVDCVSQTLEGLKSIPS.

This sequence to E.coli capsule polysaccharide export protein KpsC.

It is found in the cytoplasm. Involved in the invasion of nitrogen fixation nodules. May be involved in the biosynthesis of lipopolysaccharides as an enzyme or a regulatory protein. The chain is Lipopolysaccharide-processing protein LpsZ (lpsZ) from Rhizobium meliloti (Ensifer meliloti).